A 293-amino-acid chain; its full sequence is UDP-N-acetylglucosamine transferase subunit ALG13 (293 aa).

This sequence belongs to the glycosyltransferase 28 family. In terms of assembly, heterodimer with ALG14 to form a functional enzyme.

It localises to the endoplasmic reticulum. It carries out the reaction an N-acetyl-alpha-D-glucosaminyl-diphospho-di-trans,poly-cis-dolichol + UDP-N-acetyl-alpha-D-glucosamine = an N,N'-diacetylchitobiosyl-diphospho-di-trans,poly-cis-dolichol + UDP + H(+). In terms of biological role, involved in protein N-glycosylation. Essential for the second step of the dolichol-linked oligosaccharide pathway. The chain is UDP-N-acetylglucosamine transferase subunit ALG13 (ALG13) from Candida albicans (strain SC5314 / ATCC MYA-2876) (Yeast).